The following is a 298-amino-acid chain: Lipoyl synthase (298 aa).

The [4Fe-4S] cluster site is built by cysteine 40, cysteine 45, cysteine 51, cysteine 67, cysteine 71, cysteine 74, and serine 280. The Radical SAM core domain occupies 53–269 (AVRKTATFMI…KEIALSKGFS (217 aa)).

This sequence belongs to the radical SAM superfamily. Lipoyl synthase family. [4Fe-4S] cluster is required as a cofactor.

It localises to the cytoplasm. It carries out the reaction [[Fe-S] cluster scaffold protein carrying a second [4Fe-4S](2+) cluster] + N(6)-octanoyl-L-lysyl-[protein] + 2 oxidized [2Fe-2S]-[ferredoxin] + 2 S-adenosyl-L-methionine + 4 H(+) = [[Fe-S] cluster scaffold protein] + N(6)-[(R)-dihydrolipoyl]-L-lysyl-[protein] + 4 Fe(3+) + 2 hydrogen sulfide + 2 5'-deoxyadenosine + 2 L-methionine + 2 reduced [2Fe-2S]-[ferredoxin]. The protein operates within protein modification; protein lipoylation via endogenous pathway; protein N(6)-(lipoyl)lysine from octanoyl-[acyl-carrier-protein]. In terms of biological role, catalyzes the radical-mediated insertion of two sulfur atoms into the C-6 and C-8 positions of the octanoyl moiety bound to the lipoyl domains of lipoate-dependent enzymes, thereby converting the octanoylated domains into lipoylated derivatives. The protein is Lipoyl synthase of Bacillus cereus (strain G9842).